The sequence spans 290 residues: uncharacterized protein (290 aa).

Disordered stretches follow at residues leucine 105–valine 156 and glutamate 259–lysine 290. Polar residues predominate over residues lysine 114–lysine 130. Basic and acidic residues-rich tracts occupy residues arginine 143–valine 156 and alanine 261–leucine 280.

This is an uncharacterized protein from Homo sapiens (Human).